Here is a 345-residue protein sequence, read N- to C-terminus: Short-wave-sensitive opsin 1 (345 aa).

Residues 1-30 lie on the Extracellular side of the membrane; the sequence is MSEEEFYLFKNISSVGPWDGPQYHIAPVWA. Residue asparagine 11 is glycosylated (N-linked (GlcNAc...) asparagine). The helical transmembrane segment at 31-55 threads the bilayer; that stretch reads FYLQAAFMGTVFLIGFPLNAMVLVA. Residues 56 to 67 lie on the Cytoplasmic side of the membrane; it reads TLRYKKLRQPLN. The chain crosses the membrane as a helical span at residues 68 to 93; the sequence is YILVNVSFGGFLLCIFSVFPVFVASC. The Extracellular portion of the chain corresponds to 94–107; sequence NGYFVFGRHVCALE. The cysteines at positions 104 and 181 are disulfide-linked. Residues 108–127 traverse the membrane as a helical segment; the sequence is GFLGTVAGLVTGWSLAFLAF. The Cytoplasmic segment spans residues 128–146; that stretch reads ERYIVICKPFGNFRFSSKH. A helical membrane pass occupies residues 147–170; sequence ALTVVLATWTIGIGVSIPPFFGWS. Topologically, residues 171-196 are extracellular; sequence RFIPEGLQCSCGPDWYTVGTKYRSES. A helical transmembrane segment spans residues 197 to 224; it reads YTWFLFIFCFIVPLSLICFSYTQLLRAL. Topologically, residues 225–246 are cytoplasmic; it reads KAVAAQQQESATTQKAEREVSR. A helical transmembrane segment spans residues 247-270; sequence MVVVMVGSFCVCYVPYAAFAMYMV. The Extracellular segment spans residues 271–278; the sequence is NNRNHGLD. A helical membrane pass occupies residues 279–303; it reads LRLVTIPSFFSKSACIYNPIIYCFM. An N6-(retinylidene)lysine modification is found at lysine 290. Residues 304–345 are Cytoplasmic-facing; sequence NKQFQACIMKMVCGKAMTDESDTCSSQKTEVSTVSSTQVGPN.

This sequence belongs to the G-protein coupled receptor 1 family. Opsin subfamily. In terms of processing, phosphorylated on some or all of the serine and threonine residues present in the C-terminal region. As to expression, the three color pigments are found in the cone photoreceptor cells. Expressed throughout the epidermis and dermis, primarily in the stratum granulosum in the facial and abdominal skin (at protein level). Expressed in dermal fibroblasts (at protein level). Expressed in melanocytes (at protein level).

The protein localises to the cell membrane. It localises to the photoreceptor inner segment. Its subcellular location is the cell projection. The protein resides in the cilium. It is found in the photoreceptor outer segment. The protein localises to the cytoplasm. It localises to the perinuclear region. Functionally, visual pigments are the light-absorbing molecules that mediate vision. They consist of an apoprotein, opsin, covalently linked to cis-retinal. Required for the maintenance of cone outer segment organization in the ventral retina, but not essential for the maintenance of functioning cone photoreceptors. Involved in ensuring correct abundance and localization of retinal membrane proteins. May increase spectral sensitivity in dim light. The sequence is that of Short-wave-sensitive opsin 1 (OPN1SW) from Homo sapiens (Human).